Here is a 711-residue protein sequence, read N- to C-terminus: Amyloid beta precursor protein binding family B member 1 (711 aa).

Position 135 is a phosphoserine (S135). Disordered stretches follow at residues 140-257, 277-300, and 321-364; these read NTQG…SDLP, GTTQWEPPGRASPSQGNSPQEESQ, and EPSE…QRNA. Positions 156–174 are enriched in acidic residues; the sequence is EVEEEDEDEEEEDEEEEDL. At K205 the chain carries N6-acetyllysine. Residues 224–235 show a composition bias toward polar residues; the sequence is SWATLSQGSPSY. In terms of domain architecture, WW spans 254–286; the sequence is SDLPAGWMRVQDTSGTYYWHIPTGTTQWEPPGR. Residues 288–300 are compositionally biased toward polar residues; that stretch reads SPSQGNSPQEESQ. PID domains are found at residues 365–533 and 538–700; these read NPGI…QVEF and NELV…LWGS. S460 bears the Phosphoserine; by PKC mark. Position 518 is a phosphoserine (S518). Y548 is subject to Phosphotyrosine; by ABL1. S611 bears the Phosphoserine; by SGK1 mark. K702 is subject to N6-acetyllysine.

As to quaternary structure, component of a complex, at least composed of APBB1, RASD1/DEXRAS1 and APP. Interacts (via PID domain 2) with APP (with the intracellular domain of the amyloid-beta precursor protein). Interacts (via PID domain 2) with RASD1/DEXRAS1; impairs the transcription activation activity. Interacts (via PID domain 1) with KAT5/TIP60. Interacts (via the WW domain) with the proline-rich region of APBB1IP. Interacts with TSHZ1 and TSHZ2. Interacts (via the WW domain) with histone H2AX (when phosphorylated on 'Tyr-142') and the proline-rich region of ENAH. Interacts with MAPK8. Interacts (via PID domain 1) with TSHZ3 (via homeobox domain). Interacts with SET. Found in a trimeric complex with HDAC1 and TSHZ3; the interaction between HDAC1 and APBB1 is mediated by TSHZ3. Interacts (via WWW domain) with NEK6. Interacts (via WWW domain) with ABL1. Interacts with RNF157. Interacts with ARF6. In terms of processing, polyubiquitination by RNF157 leads to degradation by the proteasome. Post-translationally, phosphorylation at Ser-611 by SGK1 promotes its localization to the nucleus. Phosphorylated following nuclear translocation. Phosphorylation at Tyr-547 by ABL1 enhances transcriptional activation activity and reduces the affinity for RASD1/DEXRAS1. Phosphorylated at Ser-460 by PKC upon insulin activation. Acetylation at Lys-205 and Lys-702 by KAT5 promotes its transcription activator activity. Brain, not in liver, very low in other tissues. The long (neuron-specific) form is expressed only in brain.

It is found in the cell membrane. The protein localises to the cytoplasm. The protein resides in the nucleus. It localises to the cell projection. Its subcellular location is the growth cone. It is found in the nucleus speckle. In terms of biological role, transcription coregulator that can have both coactivator and corepressor functions. Adapter protein that forms a transcriptionally active complex with the gamma-secretase-derived amyloid precursor protein (APP) intracellular domain. Plays a central role in the response to DNA damage by translocating to the nucleus and inducing apoptosis. May act by specifically recognizing and binding histone H2AX phosphorylated on 'Tyr-142' (H2AXY142ph) at double-strand breaks (DSBs), recruiting other pro-apoptosis factors such as MAPK8/JNK1. Required for histone H4 acetylation at double-strand breaks (DSBs). Its ability to specifically bind modified histones and chromatin modifying enzymes such as KAT5/TIP60, probably explains its transcription activation activity. Functions in association with TSHZ3, SET and HDAC factors as a transcriptional repressor, that inhibits the expression of CASP4. Associates with chromatin in a region surrounding the CASP4 transcriptional start site(s). Involved in hippocampal neurite branching and neuromuscular junction formation, as a result plays a role in spatial memory functioning. Plays a role in the maintenance of lens transparency. May play a role in muscle cell strength. Acts as a molecular adapter that functions in neurite outgrowth by activating the RAC1-ARF6 axis upon insulin treatment. This Rattus norvegicus (Rat) protein is Amyloid beta precursor protein binding family B member 1.